We begin with the raw amino-acid sequence, 71 residues long: Ranatuerin-2PLa (71 aa).

Positions 1–22 (MFTTKKSMLLFFFLGTISLSLC) are cleaved as a signal peptide. A propeptide spanning residues 23-41 (EQERGADEDDGVEMTEEEV) is cleaved from the precursor. Cys-66 and Cys-71 are joined by a disulfide.

Expressed by the skin glands.

It is found in the secreted. Functionally, may have antimicrobial activity against the Gram-negative bacterium E.coli. The chain is Ranatuerin-2PLa from Lithobates palustris (Pickerel frog).